The primary structure comprises 401 residues: Imidazolonepropionase (401 aa).

Fe(3+) is bound by residues H66 and H68. Zn(2+)-binding residues include H66 and H68. Residues R75, Y138, and H171 each contribute to the 4-imidazolone-5-propanoate site. Residue Y138 participates in N-formimidoyl-L-glutamate binding. H236 provides a ligand contact to Fe(3+). H236 contacts Zn(2+). Q239 serves as a coordination point for 4-imidazolone-5-propanoate. D311 serves as a coordination point for Fe(3+). Position 311 (D311) interacts with Zn(2+). The N-formimidoyl-L-glutamate site is built by N313 and G315. T316 provides a ligand contact to 4-imidazolone-5-propanoate.

Belongs to the metallo-dependent hydrolases superfamily. HutI family. The cofactor is Zn(2+). Requires Fe(3+) as cofactor.

The protein localises to the cytoplasm. It carries out the reaction 4-imidazolone-5-propanoate + H2O = N-formimidoyl-L-glutamate. It participates in amino-acid degradation; L-histidine degradation into L-glutamate; N-formimidoyl-L-glutamate from L-histidine: step 3/3. Its function is as follows. Catalyzes the hydrolytic cleavage of the carbon-nitrogen bond in imidazolone-5-propanoate to yield N-formimidoyl-L-glutamate. It is the third step in the universal histidine degradation pathway. The chain is Imidazolonepropionase from Pseudomonas putida (strain ATCC 700007 / DSM 6899 / JCM 31910 / BCRC 17059 / LMG 24140 / F1).